Here is a 191-residue protein sequence, read N- to C-terminus: Large ribosomal subunit protein bL9 (191 aa).

Residues 149–191 are disordered; it reads EEAERQSKGESLTSADAIYGVDEDALRPEDFFDPEADGNEDDE. Residues 179–191 show a composition bias toward acidic residues; the sequence is FFDPEADGNEDDE.

This sequence belongs to the bacterial ribosomal protein bL9 family.

Functionally, binds to the 23S rRNA. This Agrobacterium fabrum (strain C58 / ATCC 33970) (Agrobacterium tumefaciens (strain C58)) protein is Large ribosomal subunit protein bL9 (rplI).